The chain runs to 123 residues: Small ribosomal subunit protein uS11 (123 aa).

The disordered stretch occupies residues 1-22 (MAKKRKKKLSSPEGISHIHASA).

This sequence belongs to the universal ribosomal protein uS11 family. Part of the 30S ribosomal subunit. Interacts with proteins S7 and S18. Binds to IF-3.

Functionally, located on the platform of the 30S subunit, it bridges several disparate RNA helices of the 16S rRNA. Forms part of the Shine-Dalgarno cleft in the 70S ribosome. The polypeptide is Small ribosomal subunit protein uS11 (Malacoplasma penetrans (strain HF-2) (Mycoplasma penetrans)).